The sequence spans 331 residues: Large ribosomal subunit protein uL3 (331 aa).

The protein belongs to the universal ribosomal protein uL3 family. In terms of assembly, part of the 50S ribosomal subunit. Forms a cluster with proteins L14 and L24e.

Functionally, one of the primary rRNA binding proteins, it binds directly near the 3'-end of the 23S rRNA, where it nucleates assembly of the 50S subunit. This chain is Large ribosomal subunit protein uL3, found in Thermoplasma acidophilum (strain ATCC 25905 / DSM 1728 / JCM 9062 / NBRC 15155 / AMRC-C165).